Consider the following 975-residue polypeptide: MAKGFYISKALGILAIVLGIAAVSTIIALSVVYAQEKNKNAESSPVSSPVSSPVSSPVSPTNPSTTAATTLAQSKPWNHYRLPKTLIPSSYNVTLRPYLTPNSNGLYTFKGSSTVRFTCKESTSMIIIHSKKLNYTNIQGQRVALRGVGGSQAPAIDRTELVEVTEYLVVHLREPLQVNSQYEMDSKFEGELADDLAGFYRSEYTENGVKKVLATTQMQAADARKSFPCFDEPAMKATFNITLIHPSNLVALSNMLPRGPSVPFTEEPNWNVTEFETTPIMSTYLLAYIVSEFKNVQENTPSNVLIRIWARPSAMDQGHGNYALRVTGPILDFFSRHYDTPYPLNKSDQIALPDFNAGAMENWGLVTYRESALLYDPQSSSIGNKERVVTVIAHELAHQWFGNLVTLEWWNDLWLNEGFASYVEYLGADYAEPTWNLKDLIVLNEVYRVMAVDALASSHPLSSPASEVNTPAQISEVFDSISYSKGASVLRMLSSFLTEDLFKKGVASYLHTFAYQNTIYLDLWNHLQWALGNQTAINLPYTVNAIMDRWILQMGFPVVTVDTTTGTLSQKHFLLDPQSNVTRPSKFNYLWIIPISSVKSGTQQAHYWMPDNAKVQNDLFKTTGDEWVLLNLNVTGYYLVNYDQNNWKKIHTQLQTDLSVIPVINRAQVIHDTFDLASAQIVPVTLALNSTLFLNQETEYMPWEAALSSLSYFKLMFDRSEVYGPMKNYLRKQVTPLFNHFEKITQNWTDHPQTLTEQYNEINAVSTACTYGVPKCKDLVSTLFAEWRKNPQNNPIYPNLRSTVYCNAIAQGGEEEWNFVWEQFRNTSLVNEADKLRSALACSTQVWILNRYLSYTLNPEFIRKQDVISTLSSIASNVIGQSLAWDFIQSNWKKLFEDYGTGSFSFSNLIQAVTRRFSTEFELQQLEQFKANNMDTGFGSGTRALEQALEKTKANIKWVKENKEAVLQWFRENSQ.

The Cytoplasmic portion of the chain corresponds to 1-11; that stretch reads MAKGFYISKAL. Residues 12-32 form a helical; Signal-anchor for type II membrane protein membrane-spanning segment; that stretch reads GILAIVLGIAAVSTIIALSVV. The tract at residues 33–74 is cytosolic Ser/Thr-rich junction; it reads YAQEKNKNAESSPVSSPVSSPVSSPVSPTNPSTTAATTLAQS. Over 33 to 975 the chain is Extracellular; that stretch reads YAQEKNKNAE…VLQWFRENSQ (943 aa). Residues 41 to 68 are disordered; the sequence is AESSPVSSPVSSPVSSPVSPTNPSTTAA. Residues 43 to 59 are compositionally biased toward low complexity; the sequence is SSPVSSPVSSPVSSPVS. Residues 75–975 form a metalloprotease region; that stretch reads KPWNHYRLPK…VLQWFRENSQ (901 aa). N-linked (GlcNAc...) asparagine glycosylation is present at asparagine 134. Tyrosine 182 is modified (sulfotyrosine). Residues asparagine 240 and asparagine 271 are each glycosylated (N-linked (GlcNAc...) asparagine). 358–362 serves as a coordination point for substrate; it reads GAMEN. Histidine 394 provides a ligand contact to Zn(2+). Glutamate 395 serves as the catalytic Proton acceptor. Positions 398 and 417 each coordinate Zn(2+). 2 positions are modified to sulfotyrosine: tyrosine 425 and tyrosine 430. 5 N-linked (GlcNAc...) asparagine glycosylation sites follow: asparagine 533, asparagine 580, asparagine 633, asparagine 689, and asparagine 747. 2 disulfide bridges follow: cysteine 769-cysteine 776 and cysteine 806-cysteine 842. Asparagine 826 is a glycosylation site (N-linked (GlcNAc...) asparagine).

The protein belongs to the peptidase M1 family. In terms of assembly, (Microbial infection) Interacts with CCoV spike glycoprotein. As to quaternary structure, homodimer. Interacts with SLC6A19. Zn(2+) is required as a cofactor. Sulfated. In terms of processing, N- and O-glycosylated. Post-translationally, may undergo proteolysis and give rise to a soluble form.

It localises to the cell membrane. The enzyme catalyses Release of an N-terminal amino acid, Xaa-|-Yaa- from a peptide, amide or arylamide. Xaa is preferably Ala, but may be most amino acids including Pro (slow action). When a terminal hydrophobic residue is followed by a prolyl residue, the two may be released as an intact Xaa-Pro dipeptide.. Its function is as follows. Broad specificity aminopeptidase which plays a role in the final digestion of peptides generated from hydrolysis of proteins by gastric and pancreatic proteases. Also involved in the processing of various peptides including peptide hormones, such as angiotensin III and IV, neuropeptides, and chemokines. May also be involved the cleavage of peptides bound to major histocompatibility complex class II molecules of antigen presenting cells. May have a role in angiogenesis and promote cholesterol crystallization. May have a role in amino acid transport by acting as binding partner of amino acid transporter SLC6A19 and regulating its activity. (Microbial infection) Probable receptor for canine coronavirus (CCoV). The protein is Aminopeptidase N (ANPEP) of Canis lupus familiaris (Dog).